The primary structure comprises 85 residues: Small ribosomal subunit protein bS18 (85 aa).

The protein belongs to the bacterial ribosomal protein bS18 family. As to quaternary structure, part of the 30S ribosomal subunit. Forms a tight heterodimer with protein bS6.

Functionally, binds as a heterodimer with protein bS6 to the central domain of the 16S rRNA, where it helps stabilize the platform of the 30S subunit. The sequence is that of Small ribosomal subunit protein bS18 from Hamiltonella defensa subsp. Acyrthosiphon pisum (strain 5AT).